The primary structure comprises 379 residues: Chaperone protein DnaJ (379 aa).

Residues 5-70 (DYYEILGVSK…QKRAAYDQYG (66 aa)) form the J domain. A CR-type zinc finger spans residues 134–212 (GVTKEIRIPT…CHGHGRVEKS (79 aa)). The Zn(2+) site is built by C147, C150, C164, C167, C186, C189, C200, and C203. CXXCXGXG motif repeat units lie at residues 147–154 (CDVCHGSG), 164–171 (CPTCHGSG), 186–193 (CPHCQGRG), and 200–207 (CHKCHGHG).

It belongs to the DnaJ family. In terms of assembly, homodimer. The cofactor is Zn(2+).

It localises to the cytoplasm. Functionally, participates actively in the response to hyperosmotic and heat shock by preventing the aggregation of stress-denatured proteins and by disaggregating proteins, also in an autonomous, DnaK-independent fashion. Unfolded proteins bind initially to DnaJ; upon interaction with the DnaJ-bound protein, DnaK hydrolyzes its bound ATP, resulting in the formation of a stable complex. GrpE releases ADP from DnaK; ATP binding to DnaK triggers the release of the substrate protein, thus completing the reaction cycle. Several rounds of ATP-dependent interactions between DnaJ, DnaK and GrpE are required for fully efficient folding. Also involved, together with DnaK and GrpE, in the DNA replication of plasmids through activation of initiation proteins. The polypeptide is Chaperone protein DnaJ (Salmonella agona (strain SL483)).